We begin with the raw amino-acid sequence, 172 residues long: Early nodulin-like protein 17 (172 aa).

An N-terminal signal peptide occupies residues 1–26 (MARFTVLITAVVLAFLMAAPMPGVTA). Residues 27 to 127 (KKYTVGENKF…GMKLSVKVEK (101 aa)) enclose the Phytocyanin domain. N-linked (GlcNAc...) asparagine glycans are attached at residues asparagine 42, asparagine 73, asparagine 88, and asparagine 101. Cysteine 80 and cysteine 115 are joined by a disulfide. Glycine 141 is lipidated: GPI-anchor amidated glycine. The propeptide at 142–172 (SVSMVTGLAQFMIPVSLFAFPAMWDVISRMW) is removed in mature form.

This sequence belongs to the early nodulin-like (ENODL) family.

Its subcellular location is the cell membrane. Its function is as follows. May act as a carbohydrate transporter. This Arabidopsis thaliana (Mouse-ear cress) protein is Early nodulin-like protein 17.